We begin with the raw amino-acid sequence, 490 residues long: MANQHFFKPLLPGFHTHLRIPVAFFLKNIEGRYEQKTAELRSDASKITWEVKIDGQRLTDGWKEFALSHDLRIGDIVVFRQERDMSFHVTMLGPSCCEIQYGSCSDEERNLEKKKNPNGEAKSSSLDPSCFSANVAPSSLRYDLMLFPMGFVRENGVVGSGKIVLMNEKGRSWNFNLRQKPSCGTVYVRGGWVSFCDANGLQAGDIYTFKLIKRGGTLVLRLLPKGAESCSLDPSCFVANVAPSTLRYDTLYLPKRFMRENGVDKRRGEMILMNEKGKSWTLDLKLKKSCGTSLIRRGWRSFCSANGLRAGSIITFKLIKKSGTLVLCLLSNEPEEEVCSEANEVESLSTDQESHEESSHNEKISRRKEKKGRMIWKASSSPSENRFVTLNLTPYNILRSALRLPIPFTRMNGINEETKMTLLDKHGMKWLTTLRLVDYKRKRLGMVGGWKGFIQANGVKANESIMLELIWEEETSCVLKFCSKVKLAIK.

3 consecutive DNA-binding regions (TF-B3) follow at residues 3–95 (NQHF…LGPS), 130–226 (CFSA…LPKG), and 236–333 (CFVA…LSNE). The interval 343–367 (NEVESLSTDQESHEESSHNEKISRR) is disordered. A compositionally biased stretch (basic and acidic residues) spans 352–364 (QESHEESSHNEKI). Residues 387–484 (FVTLNLTPYN…TSCVLKFCSK (98 aa)) constitute a DNA-binding region (TF-B3 4).

The protein localises to the nucleus. The sequence is that of B3 domain-containing protein REM14 (REM14) from Arabidopsis thaliana (Mouse-ear cress).